The primary structure comprises 134 residues: MKSLTWILGLWALAACFTPGESQRGPRGPYPPGPLAPPPPPCFPFGTGFVPPPHPPPYGPGRFPPPLSPPYGPGRIPPSPPPPYGPGRIQSHSLPPPYGPGYPQPPSQPRPYPPGPPFFPVNSPTDPALPTPAP.

The first 22 residues, 1–22 (MKSLTWILGLWALAACFTPGES), serve as a signal peptide directing secretion. Residues 19–134 (PGESQRGPRG…TDPALPTPAP (116 aa)) form a disordered region. 3 stretches are compositionally biased toward pro residues: residues 28–43 (GPYP…PPCF), 50–85 (VPPP…PPYG), and 94–119 (LPPP…PPFF).

This sequence belongs to the PROL1/PROL3 family.

It is found in the secreted. Functionally, may play a role in protection or detoxification. The sequence is that of Submaxillary gland androgen-regulated protein 3A (SMR3A) from Homo sapiens (Human).